Here is a 354-residue protein sequence, read N- to C-terminus: MSGNTIGKIFCVTTFGESHGEALGCIIDGTPPGLELSCKDLQYDLNRRRPGTSRYTTLRREPDEVNILSGIFNGVTTGTSIGLIIYNHDHRSQDYSDIKNLFRPGHADYTYEKKYGIRDYRGGGRSSARETAMRVAAGAIAKKYLNEKYGITIRAYLSAMGNIKCPFKSWQEVENNPFFCSDPEKILALENLIKYLKKIGDSIGAEITIIAENIPVGLGEPVFDRLDADLSHALMSINAAKGVEIGDGFSVINQRGSEHRDEITPQGFLTNHSGGILGGISNGREIVLKVAFKPTSSIRKAGNTINKNNEKVQIVTKGRHDPCVGLRAVPITEAMVAIVLMDHLLRFRAQCSGK.

NADP(+) is bound by residues R48 and R54. FMN is bound by residues 125–127, 238–239, G278, 293–297, and R319; these read RSS, NA, and KPTSS.

Belongs to the chorismate synthase family. Homotetramer. The cofactor is FMNH2.

The catalysed reaction is 5-O-(1-carboxyvinyl)-3-phosphoshikimate = chorismate + phosphate. It functions in the pathway metabolic intermediate biosynthesis; chorismate biosynthesis; chorismate from D-erythrose 4-phosphate and phosphoenolpyruvate: step 7/7. Catalyzes the anti-1,4-elimination of the C-3 phosphate and the C-6 proR hydrogen from 5-enolpyruvylshikimate-3-phosphate (EPSP) to yield chorismate, which is the branch point compound that serves as the starting substrate for the three terminal pathways of aromatic amino acid biosynthesis. This reaction introduces a second double bond into the aromatic ring system. The protein is Chorismate synthase of Buchnera aphidicola subsp. Acyrthosiphon pisum (strain 5A).